The primary structure comprises 613 residues: MKGEPKTYSMSDLSYYGEKAQQQNEKQQKQYVVRRNSTQSTSKQNVSVVLEDNASESNELPKGFILYASLIALALSLFLAALDIMIVSTIIEEVAKQFGSYSEIGWLFTGYSLPNALLALIWGRIATPIGFKETMLFAIVIFEIGSLISALANSMSMLIGGRVIAGVGGCGIQSLSFVIGSTLVEESQRGILIAVLSCSFAIASVVGPFLGGVFTSSVTWRWCFYVNLPIGGLAFFLFLFFYNPGLSTFQETMDNIRKFPSQFIEIVRNVAYHLLKIKGFSKLNGWRKPFMELIFMYDIIEFVFCSAGFTCILLAFTFGGNRYAWNSASIIILFIIGIVLVVLAGIYDFLVFPKFNIVKATPHYQPLMSWTNIKKPGIFTVNIALFLTCAGYISQFTYIVQYFQLIYNDSAWRAAVHLVACIISTVVTAILCGAITDKTRQIKPIIVISSIFGVVGAGILTLLNNNANNSAHIGLLILPGVAFGGLAQSSMLASQIQLDKKSPTFRSDFVSITTFNTFCKNLGQALGGVISNTVFSAAAIKKLTKANIQLPDGTTVDNLVIYRQTNFDGSHSKLGNIISESLTDVFYMALGFYALSLIFAVFASNKKVTASLR.

The tract at residues 1 to 38 (MKGEPKTYSMSDLSYYGEKAQQQNEKQQKQYVVRRNST) is disordered. Over 1 to 70 (MKGEPKTYSM…PKGFILYASL (70 aa)) the chain is Extracellular. A helical transmembrane segment spans residues 71-91 (IALALSLFLAALDIMIVSTII). Topologically, residues 92–102 (EEVAKQFGSYS) are cytoplasmic. A helical transmembrane segment spans residues 103-123 (EIGWLFTGYSLPNALLALIWG). Residues 124 to 134 (RIATPIGFKET) are Extracellular-facing. Residues 135–155 (MLFAIVIFEIGSLISALANSM) traverse the membrane as a helical segment. The Cytoplasmic segment spans residues 156–163 (SMLIGGRV). The chain crosses the membrane as a helical span at residues 164–184 (IAGVGGCGIQSLSFVIGSTLV). Topologically, residues 185 to 189 (EESQR) are extracellular. The chain crosses the membrane as a helical span at residues 190-210 (GILIAVLSCSFAIASVVGPFL). The Cytoplasmic segment spans residues 211–221 (GGVFTSSVTWR). The helical transmembrane segment at 222–242 (WCFYVNLPIGGLAFFLFLFFY) threads the bilayer. Over 243 to 298 (NPGLSTFQETMDNIRKFPSQFIEIVRNVAYHLLKIKGFSKLNGWRKPFMELIFMYD) the chain is Extracellular. The chain crosses the membrane as a helical span at residues 299–319 (IIEFVFCSAGFTCILLAFTFG). The Cytoplasmic segment spans residues 320 to 329 (GNRYAWNSAS). Residues 330-350 (IIILFIIGIVLVVLAGIYDFL) traverse the membrane as a helical segment. At 351–375 (VFPKFNIVKATPHYQPLMSWTNIKK) the chain is on the extracellular side. The chain crosses the membrane as a helical span at residues 376–396 (PGIFTVNIALFLTCAGYISQF). The Cytoplasmic portion of the chain corresponds to 397–414 (TYIVQYFQLIYNDSAWRA). The chain crosses the membrane as a helical span at residues 415–435 (AVHLVACIISTVVTAILCGAI). Residues 436-443 (TDKTRQIK) are Extracellular-facing. Residues 444–464 (PIIVISSIFGVVGAGILTLLN) traverse the membrane as a helical segment. Residues 465-472 (NNANNSAH) lie on the Cytoplasmic side of the membrane. The chain crosses the membrane as a helical span at residues 473 to 493 (IGLLILPGVAFGGLAQSSMLA). Residues 494 to 581 (SQIQLDKKSP…SKLGNIISES (88 aa)) lie on the Extracellular side of the membrane. Residues 582–602 (LTDVFYMALGFYALSLIFAVF) form a helical membrane-spanning segment. The Cytoplasmic segment spans residues 603–613 (ASNKKVTASLR).

This sequence belongs to the major facilitator superfamily.

The protein resides in the cell membrane. Functionally, transporter protein required for adaptation to high stress imposed by low-chain organic acids, in particular by acetic acid, and for resistance to azoles, especially to ketoconazole and fluconazole. The protein is Azole resistance protein 1 (AZR1) of Saccharomyces cerevisiae (strain ATCC 204508 / S288c) (Baker's yeast).